The following is a 501-amino-acid chain: Lysine--tRNA ligase (501 aa).

Residues glutamate 404 and glutamate 411 each coordinate Mg(2+).

It belongs to the class-II aminoacyl-tRNA synthetase family. As to quaternary structure, homodimer. It depends on Mg(2+) as a cofactor.

It localises to the cytoplasm. The catalysed reaction is tRNA(Lys) + L-lysine + ATP = L-lysyl-tRNA(Lys) + AMP + diphosphate. This chain is Lysine--tRNA ligase, found in Campylobacter jejuni subsp. doylei (strain ATCC BAA-1458 / RM4099 / 269.97).